The sequence spans 181 residues: Thioredoxin M-type, chloroplastic (181 aa).

The transit peptide at 1-67 (MAIENCLQLS…RQFRYSSVVC (67 aa)) directs the protein to the chloroplast. The region spanning 68 to 180 (KASEAVKEVQ…LTDSIEKYLS (113 aa)) is the Thioredoxin domain. Residues cysteine 104 and cysteine 107 each act as nucleophile in the active site. The cysteines at positions 104 and 107 are disulfide-linked.

It belongs to the thioredoxin family. Plant M-type subfamily. In terms of assembly, forms a complex with heterodimeric ferredoxin-thioredoxin reductase (FTR) and ferredoxin.

It is found in the plastid. Its subcellular location is the chloroplast. Functionally, participates in various redox reactions through the reversible oxidation of the active center dithiol to a disulfide. The M form is known to activate NADP-malate dehydrogenase. In Spinacia oleracea (Spinach), this protein is Thioredoxin M-type, chloroplastic.